The primary structure comprises 333 residues: D-alanine--D-alanine ligase (333 aa).

One can recognise an ATP-grasp domain in the interval 124–329 (KMWFSALGIR…FAQYLSGNIM (206 aa)). Residue 154–209 (ALEKWGSIFIKAASQGSSVGCYRVDNKEQLANSLEEAFKYSPYVVVEKTINARELE) participates in ATP binding. Mg(2+) contacts are provided by D283, E296, and N298.

Belongs to the D-alanine--D-alanine ligase family. The cofactor is Mg(2+). Mn(2+) is required as a cofactor.

It is found in the cytoplasm. It catalyses the reaction 2 D-alanine + ATP = D-alanyl-D-alanine + ADP + phosphate + H(+). It participates in cell wall biogenesis; peptidoglycan biosynthesis. Its function is as follows. Cell wall formation. This Shewanella halifaxensis (strain HAW-EB4) protein is D-alanine--D-alanine ligase.